The primary structure comprises 354 residues: Serum paraoxonase/arylesterase 2 (354 aa).

A disulfide bond links Cys42 and Cys352. 2 residues coordinate Ca(2+): Asp53 and Asp54. His114 functions as the Proton acceptor in the catalytic mechanism. Ca(2+) is bound by residues Ile116, Asn167, Asp168, and Asn223. The N-linked (GlcNAc...) asparagine glycan is linked to Asn254. Ca(2+)-binding residues include Asp268 and Asn269. Asn269 and Asn323 each carry an N-linked (GlcNAc...) asparagine glycan.

The protein belongs to the paraoxonase family. Homotrimer. Requires Ca(2+) as cofactor. Glycosylated. In terms of processing, the signal sequence is not cleaved.

It is found in the membrane. It catalyses the reaction a phenyl acetate + H2O = a phenol + acetate + H(+). It carries out the reaction an N-acyl-L-homoserine lactone + H2O = an N-acyl-L-homoserine + H(+). In terms of biological role, capable of hydrolyzing lactones and a number of aromatic carboxylic acid esters. In Canis lupus familiaris (Dog), this protein is Serum paraoxonase/arylesterase 2 (PON2).